The primary structure comprises 397 residues: Cathepsin E-B (397 aa).

A signal peptide spans 1–16 (MRQILVLLLFVTLVYG). Positions 17–49 (LIRVPLKRQKSIRKTPKEKGKLSHVWTQQGIDM) are cleaved as a propeptide — activation peptide. The 312-residue stretch at 74–385 (YFGEISIGTP…DRGNNRVGLA (312 aa)) folds into the Peptidase A1 domain. N-linked (GlcNAc...) asparagine glycosylation occurs at Asn86. Residue Asp92 is part of the active site. Cys105 and Cys110 are oxidised to a cystine. N-linked (GlcNAc...) asparagine glycosylation occurs at Asn130. A disulfide bridge connects residues Cys268 and Cys272. The active site involves Asp277. Residues Cys310 and Cys344 are joined by a disulfide bond.

The protein belongs to the peptidase A1 family. Homodimer; disulfide-linked. Glycosylated. Contains high mannose-type oligosaccharide. Expressed predominantly in the anterior and posterior adult stomach and at much lower levels in the larval foregut.

It is found in the endosome. The catalysed reaction is Similar to cathepsin D, but slightly broader specificity.. May have a role in immune function. Probably involved in the processing of antigenic peptides during MHC class II-mediated antigen presentation. This is Cathepsin E-B (ctse-b) from Xenopus laevis (African clawed frog).